Here is an 843-residue protein sequence, read N- to C-terminus: F-box only protein 11 (843 aa).

The segment at 1-63 (MVAEESGPGA…RVSGKSQDLS (63 aa)) is disordered. Residues 30–45 (PTKNSMEGASTSTTEN) are compositionally biased toward polar residues. In terms of domain architecture, F-box spans 69-115 (QYLQEKLPDEVVLKIFSYLLEQDLCRAACVCKRFSELANDPILWKRL). PbH1 repeat units follow at residues 311–333 (GACP…YITD), 334–356 (HAQG…WVKN), 357–379 (HGNP…FTFD), 380–402 (HGMG…EVKA), 403–425 (YANP…YVHE), 426–448 (KGRG…WITS), 449–471 (NSDP…YIFG), 472–494 (DGRG…QIRT), 495–517 (NSCP…YVHE), 518–540 (KGQG…WVTT), 541–563 (GSTP…YFYD), 564–586 (NGHG…QIRT), 587–609 (GSNP…LVYN), 610–632 (SGLG…WIKT), 633–655 (DSNP…CIFN), 656–678 (GGRG…LIST), 679–701 (NSHP…EITN), 702–724 (HATA…FLAS), and 725–746 (GVNV…EKAV). The UBR-type zinc finger occupies 749-820 (GQCLYKISSY…LSNPCTLAGE (72 aa)).

In terms of assembly, component of the SCF(FBXO11) complex consisting of CUL1, RBX1, SKP1 and FBXO11. Interacts with CIITA.

It is found in the nucleus. It localises to the chromosome. It functions in the pathway protein modification; protein ubiquitination. Its function is as follows. Substrate recognition component of a SCF (SKP1-CUL1-F-box protein) E3 ubiquitin-protein ligase complex which mediates the ubiquitination and subsequent proteasomal degradation of target proteins, such as DTL/CDT2, BCL6, SNAI1 and PRDM1/BLIMP1. The SCF(FBXO11) complex mediates ubiquitination and degradation of BCL6, thereby playing a role in the germinal center B-cells terminal differentiation toward memory B-cells and plasma cells. The SCF(FBXO11) complex also mediates ubiquitination and degradation of DTL, an important step for the regulation of TGF-beta signaling, cell migration and the timing of the cell-cycle progression and exit. The SCF(FBXO11) complex also catalyzes ubiquitination and degradation of GSK3B-phosphorylated SNAI1. Binds to and neddylates phosphorylated p53/TP53, inhibiting its transcriptional activity. Plays a role in the regulatiom of erythropoiesis but not myelopoiesis or megakaryopoiesis. Mechanistically, activates erythroid genes by mediating the degradation of BAHD1, a heterochromatin-associated protein that recruits corepressors to H3K27me3 marks. Participates in macrophage cell death and inflammation in response to bacterial toxins by regulating the expression of complement 5a receptor 1/C5AR1 and IL-1beta. Acts as a critical regulator to determine the level of MHC-II by mediating the recognition of degron at the P/S/T domain of CIITA leading to its ubiquitination and subsequent degradation via the proteasome. Participates in the antiviral repsonse by initiating the activation of TBK1-IRF3-IFN-I axis. Mediates the 'Lys-63'-linked ubiquitination of TRAF3 to strengthen the interaction between TRAF3 and TBK1. This chain is F-box only protein 11 (Fbxo11), found in Rattus norvegicus (Rat).